A 414-amino-acid polypeptide reads, in one-letter code: Probable mannose-1-phosphate guanyltransferase (414 aa).

The protein belongs to the transferase hexapeptide repeat family.

It localises to the cytoplasm. The protein resides in the nucleus. The catalysed reaction is alpha-D-mannose 1-phosphate + GTP + H(+) = GDP-alpha-D-mannose + diphosphate. The protein operates within nucleotide-sugar biosynthesis; GDP-alpha-D-mannose biosynthesis; GDP-alpha-D-mannose from alpha-D-mannose 1-phosphate (GTP route): step 1/1. Functionally, involved in cell wall synthesis where it is required for glycosylation. The chain is Probable mannose-1-phosphate guanyltransferase from Schizosaccharomyces pombe (strain 972 / ATCC 24843) (Fission yeast).